A 342-amino-acid chain; its full sequence is Holliday junction branch migration complex subunit RuvB (342 aa).

Positions 1–181 (MENRMVTPFD…FGMLCAMEFY (181 aa)) are large ATPase domain (RuvB-L). ATP-binding positions include leucine 20, arginine 21, glycine 62, lysine 65, threonine 66, threonine 67, 128–130 (EDY), arginine 171, tyrosine 181, and arginine 218. Threonine 66 lines the Mg(2+) pocket. Positions 182 to 252 (TDEELMEIVV…GAKAALDLLE (71 aa)) are small ATPAse domain (RuvB-S). Residues 255–342 (KEGLDKIDNK…KDNQVSIFNK (88 aa)) are head domain (RuvB-H). Residues arginine 310 and arginine 315 each coordinate DNA.

The protein belongs to the RuvB family. In terms of assembly, homohexamer. Forms an RuvA(8)-RuvB(12)-Holliday junction (HJ) complex. HJ DNA is sandwiched between 2 RuvA tetramers; dsDNA enters through RuvA and exits via RuvB. An RuvB hexamer assembles on each DNA strand where it exits the tetramer. Each RuvB hexamer is contacted by two RuvA subunits (via domain III) on 2 adjacent RuvB subunits; this complex drives branch migration. In the full resolvosome a probable DNA-RuvA(4)-RuvB(12)-RuvC(2) complex forms which resolves the HJ.

The protein resides in the cytoplasm. The catalysed reaction is ATP + H2O = ADP + phosphate + H(+). Its function is as follows. The RuvA-RuvB-RuvC complex processes Holliday junction (HJ) DNA during genetic recombination and DNA repair, while the RuvA-RuvB complex plays an important role in the rescue of blocked DNA replication forks via replication fork reversal (RFR). RuvA specifically binds to HJ cruciform DNA, conferring on it an open structure. The RuvB hexamer acts as an ATP-dependent pump, pulling dsDNA into and through the RuvAB complex. RuvB forms 2 homohexamers on either side of HJ DNA bound by 1 or 2 RuvA tetramers; 4 subunits per hexamer contact DNA at a time. Coordinated motions by a converter formed by DNA-disengaged RuvB subunits stimulates ATP hydrolysis and nucleotide exchange. Immobilization of the converter enables RuvB to convert the ATP-contained energy into a lever motion, pulling 2 nucleotides of DNA out of the RuvA tetramer per ATP hydrolyzed, thus driving DNA branch migration. The RuvB motors rotate together with the DNA substrate, which together with the progressing nucleotide cycle form the mechanistic basis for DNA recombination by continuous HJ branch migration. Branch migration allows RuvC to scan DNA until it finds its consensus sequence, where it cleaves and resolves cruciform DNA. In Clostridium botulinum (strain Loch Maree / Type A3), this protein is Holliday junction branch migration complex subunit RuvB.